Reading from the N-terminus, the 74-residue chain is uncharacterized protein (74 aa).

An N-terminal signal peptide occupies residues 1–19 (MNPGFDAVDQETAAAQAVA).

This is an uncharacterized protein from Mycobacterium tuberculosis (strain ATCC 25618 / H37Rv).